Here is a 44-residue protein sequence, read N- to C-terminus: Defensin-like peptide (44 aa).

3 cysteine pairs are disulfide-bonded: Cys-7-Cys-32, Cys-18-Cys-40, and Cys-22-Cys-42.

In terms of tissue distribution, hemolymph.

The protein localises to the secreted. In terms of biological role, has antibacterial activity against the Gram-positive bacterium S.lutea (MIC=1.9 uM). Lacks antibacterial activity against the Gram-positive bacteria L.monocytogenes and M.luteus, and the Gram-negative bacteria E.coli D31, E.coli ATCC 25922, and S.typhimurium. Has antifungal activity against A.niger (MIC=2.9 uM), C.albicans (MIC=2.9 uM), C.fructus (MIC=2.9 uM), C.wickerhamii (MIC=2.9 uM), P.pastoris (MIC=2.9 uM), P.stiptis (MIC=2.9 uM), P.tannophilus (MIC=2.9 uM), T.harzianum (MIC=2.9 uM), and Z.marxianus (MIC=2.9 uM), but lacks antifungal activity against C.albidus, F.oxysporum, and S.cerevisiae. The chain is Defensin-like peptide from Galleria mellonella (Greater wax moth).